The primary structure comprises 309 residues: Protein EXORDIUM-like 1 (309 aa).

The signal sequence occupies residues 1-23 (MASFVMGYFLLFAVAFMCLDART).

The protein belongs to the EXORDIUM family.

The protein resides in the secreted. It localises to the extracellular space. The protein localises to the apoplast. May play a role in a brassinosteroid-dependent regulatory pathway that controls growth and development under low carbon and energy availability. This chain is Protein EXORDIUM-like 1 (EXL1), found in Arabidopsis thaliana (Mouse-ear cress).